The chain runs to 294 residues: Glyceraldehyde-3-phosphate dehydrogenase (294 aa).

The NAD(+) site is built by Asp19, Lys63, and Thr105. D-glyceraldehyde 3-phosphate is bound by residues 134 to 136 (SCT), Thr165, 194 to 195 (TG), and Arg217. Catalysis depends on Cys135, which acts as the Nucleophile.

This sequence belongs to the glyceraldehyde-3-phosphate dehydrogenase family. In terms of assembly, homotetramer.

It localises to the cytoplasm. The enzyme catalyses D-glyceraldehyde 3-phosphate + phosphate + NAD(+) = (2R)-3-phospho-glyceroyl phosphate + NADH + H(+). It participates in carbohydrate degradation; glycolysis; pyruvate from D-glyceraldehyde 3-phosphate: step 1/5. Catalyzes the oxidative phosphorylation of glyceraldehyde 3-phosphate (G3P) to 1,3-bisphosphoglycerate (BPG) using the cofactor NAD. The first reaction step involves the formation of a hemiacetal intermediate between G3P and a cysteine residue, and this hemiacetal intermediate is then oxidized to a thioester, with concomitant reduction of NAD to NADH. The reduced NADH is then exchanged with the second NAD, and the thioester is attacked by a nucleophilic inorganic phosphate to produce BPG. The sequence is that of Glyceraldehyde-3-phosphate dehydrogenase (gap) from Atlantibacter hermannii (Escherichia hermannii).